A 1223-amino-acid chain; its full sequence is MSADNEDYYDEDPYGFEEENAPITAEDTWAVISAFFREKGLVSQQLDSFNQFVDYTLQDIISEDSTLILEQLAQHTTEQDNISRKYEISFGKIYVTKPMVNESDGVTHALYPQEARLRNLTYSSGLFVDVTKRTYEAVDVPGRDLNYQLIAEESEEDSESGKVFIGRLPIMLRSKNCYLSDATESDLYKLKECPFDMGGYFIINGSEKVLIAQERSAGNIVQVFKKAAPSPISHVAEIRSALEKGSRFISTLQVKLYGRESSSARTIKATLPYIKQDIPIVIIFRALGIIPDGEILEHICYDVNDWQMLEMLKPCVEDGFVIQDRETALDFIGRRGTALGIKKEKRIQYAKDILQKEFLPHITQLEGFESRKAFFLGYMINRLLLCALDRKDQDDRDHFGKKRLDLAGPLLAQLFKTLFRKLTKDIFRYMQRTVEEANDFNMKLAINAKTITSGLKYALATGNWGEQKKAMSSRAGVSQVLNRYTYSSTLSHLRRTNTPIGRDGKLAKPRQLHNTHWGLVCPAETPEGQACGLVKNLSLMSCISVGADPMPIITFLSEWGMEPLEDYVPHQSPDATRVFVNGVWHGVHRNPARLMETLRTLRRKGDINPEVSMIRDIREQELKIFTDAGRVYRPLFIVEDDEELGRKELKVRKGHVAKLMATEYQDIEGGFEDAEDYTWSSLLNEGLVEYIDAEEEESILIAMQPEDLEPTAVEQDIPKENVDLAKRIKVTHHATTFTHCEIHPSMILGVAASIIPFPDHNQSPRNTYQSAMGKQAMGVFLTNYNFRMDTMANILYYPQKPLGTTRAMEYLKFRELPAGQNAIVAIACYSGYNQEDSMIMNQSSIDRGLFRSLFFRSYMDQEKKYGMSITETFEKPQRTNTLRMKHGTYDKLDEDGLIAPGVRVSGEDIIIGKTTPIAPDEEELGQRTAYHSKRDASTPLRSTENGIVDQVLITTNQDGLKFVKVRVRTTKVPQIGDKFASRHGQKGTIGITYRREDMPFTAEGIVPDLIINPHAIPSRMTVAHLIECLLSKVAALSGNEGDASPFTDITVEGISKLLREHGYQSRGFEVMYNGHTGKKLMAQIFFGPTYYQRLRHMVDDKIHARARGPMQVLTRQPVEGRSRDGGLRFGEMERDCMIAHGAAAFLKERLMEASDAFRVHICGICGLMSVIAKLNHNQFECKGCDNKIDIYQIHIPYAAKLLFQELMAMNITPRLYTDRSRDF.

The tract at residues methionine 1–asparagine 20 is disordered. Position 836 (aspartate 836) interacts with Mg(2+). The Zn(2+) site is built by cysteine 1162, cysteine 1165, cysteine 1181, and cysteine 1184. The segment at cysteine 1162–cysteine 1184 adopts a C4-type zinc-finger fold.

It belongs to the RNA polymerase beta chain family. As to quaternary structure, component of the RNA polymerase II (Pol II) complex consisting of 12 subunits.

The protein resides in the nucleus. It catalyses the reaction RNA(n) + a ribonucleoside 5'-triphosphate = RNA(n+1) + diphosphate. Its function is as follows. DNA-dependent RNA polymerase catalyzes the transcription of DNA into RNA using the four ribonucleoside triphosphates as substrates. Second largest component of RNA polymerase II which synthesizes mRNA precursors and many functional non-coding RNAs. Proposed to contribute to the polymerase catalytic activity and forms the polymerase active center together with the largest subunit. Pol II is the central component of the basal RNA polymerase II transcription machinery. It is composed of mobile elements that move relative to each other. RPB2 is part of the core element with the central large cleft, the clamp element that moves to open and close the cleft and the jaws that are thought to grab the incoming DNA template. The polypeptide is DNA-directed RNA polymerase II subunit RPB2 (RPB2) (Candida glabrata (strain ATCC 2001 / BCRC 20586 / JCM 3761 / NBRC 0622 / NRRL Y-65 / CBS 138) (Yeast)).